Reading from the N-terminus, the 582-residue chain is Regulatory solute carrier protein family 1 member 1 (582 aa).

Disordered regions lie at residues 1–32 (MSSL…ARSV), 56–76 (KASA…LQVL), 143–180 (EKSW…VPQD), 303–325 (VDMS…HGQP), 363–384 (VTCQ…SGRR), 390–409 (LTPS…SESG), 426–452 (ASTS…ESAR), and 483–529 (SEGA…LSTP). The span at 16–32 (SGQSPEVGSPTSLARSV) shows a compositional bias: polar residues. The span at 148–179 (PENQTPSPVNGLQQHRETGSVQREAGQQSVPQ) shows a compositional bias: polar residues. A compositionally biased stretch (polar residues) spans 390 to 408 (LTPSDQYSQGSCHQATSES). Composition is skewed to basic and acidic residues over residues 438-452 (SPDR…ESAR) and 490-503 (PSEH…DRPE). Residues 536 to 576 (IFPAADVDRILGAGFTLQEALGALHRVGGNADLALLVLLAK) form the UBA domain.

As to quaternary structure, interacts with YRDC. As to expression, expressed in epithelial and subepithelial cells of small intestine.

The protein localises to the cell membrane. It localises to the nucleus. The protein resides in the golgi apparatus. Its subcellular location is the trans-Golgi network. Functionally, mediates transcriptional and post-transcriptional regulation of SLC5A1. Inhibits a dynamin and PKC-dependent exocytotic pathway of SLC5A1. Also involved in transcriptional regulation of SLC22A2. Exhibits glucose-dependent, short-term inhibition of SLC5A1 and SLC22A2 by inhibiting the release of vesicles from the trans-Golgi network. Regulates the expression of SLC5A1 in a tissue-specific manner and is specifically involved in its regulation in the small intestine. This Mus musculus (Mouse) protein is Regulatory solute carrier protein family 1 member 1 (Rsc1a1).